We begin with the raw amino-acid sequence, 281 residues long: Putative rRNA methyltransferase YqxC (281 aa).

The 62-residue stretch at 6–67 (ERLDVLLVER…NPLRYVSRGG (62 aa)) folds into the S4 RNA-binding domain.

This sequence belongs to the TlyA family.

In Bacillus subtilis (strain 168), this protein is Putative rRNA methyltransferase YqxC (yqxC).